The following is a 514-amino-acid chain: Peptide chain release factor 3 (514 aa).

The region spanning 8–268 (KKRRTFAIIS…TFLKFAPEPH (261 aa)) is the tr-type G domain. GTP is bound by residues 17–24 (SHPDAGKT), 85–89 (DTPGH), and 139–142 (NKLD).

The protein belongs to the TRAFAC class translation factor GTPase superfamily. Classic translation factor GTPase family. PrfC subfamily.

Its subcellular location is the cytoplasm. Its function is as follows. Increases the formation of ribosomal termination complexes and stimulates activities of RF-1 and RF-2. It binds guanine nucleotides and has strong preference for UGA stop codons. It may interact directly with the ribosome. The stimulation of RF-1 and RF-2 is significantly reduced by GTP and GDP, but not by GMP. The sequence is that of Peptide chain release factor 3 from Streptococcus sanguinis (strain SK36).